The following is a 118-amino-acid chain: Thioredoxin H3 (118 aa).

At alanine 2 the chain carries N-acetylalanine. A Thioredoxin domain is found at 2–113; sequence AAEGEVIACH…IIANLEKHKT (112 aa). Catalysis depends on nucleophile residues cysteine 39 and cysteine 42. Residues cysteine 39 and cysteine 42 are joined by a disulfide bond.

This sequence belongs to the thioredoxin family. Plant H-type subfamily. Interacts with FBA5 and FBA8. Interacts with FBA6. Interacts with MDH1.

The protein resides in the cytoplasm. Thiol-disulfide oxidoreductase that possesses disulfide reductase and insulin disulfide bonds reducing activities. Heat shock causes oligomerization and formation of high molecular weight (HMW) complexes with concomitant functional switching from a disulfide reductase to chaperone. The sequence is that of Thioredoxin H3 (TRX3) from Arabidopsis thaliana (Mouse-ear cress).